Here is a 157-residue protein sequence, read N- to C-terminus: DNA gyrase inhibitor (157 aa).

It belongs to the DNA gyrase inhibitor family. In terms of assembly, interacts with DNA gyrase.

Its subcellular location is the cytoplasm. Functionally, inhibits the supercoiling activity of DNA gyrase. Acts by inhibiting DNA gyrase at an early step, prior to (or at the step of) binding of DNA by the gyrase. It protects cells against toxins that target DNA gyrase, by inhibiting activity of these toxins and reducing the formation of lethal double-strand breaks in the cell. The polypeptide is DNA gyrase inhibitor (Citrobacter rodentium (strain ICC168) (Citrobacter freundii biotype 4280)).